We begin with the raw amino-acid sequence, 373 residues long: MMPANEDKENNIVYTGNESSGINFPQTPAHLLKRSHSNILKPPVRLDQLKRDANSNNGNTLKYIQGGKEVSPTKRLHTHAQQQGRLPLAAKDNNRSKSFIFPETSNQSKDADLPQLQNTLSIRKNDQLRKLSQISRSRSRANHNDLLSNSRKLQKYGSVLGYNALPKMKSLVLKDLADSGKNEESSDDDEGNEDSESKLGKKLQSALLKQDSSDGENELNGGLGLFNEQGGLQQLIKNSTKNEQKTKNDKSDKTDDYDIEIAPQRQEPLPYVPEGYSPFQQDDIEKLKTFNSPYKLDLEDEDDTPDKVDLLPLEQIDEEGEKDETECITRNQEEGAALPLLSKNFKEVAAVPTMELVYSEEGLDPEELEDLVT.

The span at 1 to 10 (MMPANEDKEN) shows a compositional bias: basic and acidic residues. Residues 1 to 27 (MMPANEDKENNIVYTGNESSGINFPQT) are disordered. Polar residues predominate over residues 12 to 26 (IVYTGNESSGINFPQ). The short motif at 85–88 (RLPL) is the D-box element. Residues 177–278 (ADSGKNEESS…LPYVPEGYSP (102 aa)) form a disordered region. A phosphoserine mark is found at S185, S186, S212, and S213. A compositionally biased stretch (acidic residues) spans 185 to 194 (SSDDDEGNED). Residues 225–235 (LFNEQGGLQQL) show a composition bias toward low complexity. Positions 240 to 256 (TKNEQKTKNDKSDKTDD) are enriched in basic and acidic residues. S277 carries the phosphoserine modification. S292 is subject to Phosphoserine; by CDC28.

Belongs to the securin family. In terms of assembly, interacts with the caspase-like ESP1, and prevents its protease activity probably by covering its active site. Interacts with CDC20. Phosphorylated by CDC28. The phosphorylation may be important for ESP1 localization to the nucleus. Post-translationally, ubiquitinated by the anaphase promoting complex (APC) at the onset of anaphase, conducting to its degradation.

The protein resides in the cytoplasm. It is found in the nucleus. Functionally, regulatory protein, which plays a central role in chromosome stability. Probably acts by blocking the action of key proteins. During the mitosis, it blocks Separase/ESP1 function, preventing the proteolysis of the cohesin complex and the subsequent segregation of the chromosomes. At the onset of anaphase, it is ubiquitinated, conducting to its destruction and to the liberation of ESP1. This is Securin (PDS1) from Saccharomyces cerevisiae (strain ATCC 204508 / S288c) (Baker's yeast).